We begin with the raw amino-acid sequence, 534 residues long: CTP synthase (534 aa).

The amidoligase domain stretch occupies residues 1-265 (MKYIIVTGGV…TTQLMKHLQL (265 aa)). Position 12 (Ser-12) interacts with CTP. Ser-12 lines the UTP pocket. 13-18 (GLGKGI) serves as a coordination point for ATP. L-glutamine is bound at residue Tyr-53. ATP is bound at residue Asp-70. Residues Asp-70 and Glu-140 each coordinate Mg(2+). Residues 147-149 (DIE), 186-191 (KTKPSQ), and Lys-222 each bind CTP. Residues 186–191 (KTKPSQ) and Lys-222 contribute to the UTP site. The Glutamine amidotransferase type-1 domain occupies 289-530 (KLAIVGKYTN…VAAMCKYRKE (242 aa)). An L-glutamine-binding site is contributed by Gly-352. Cys-379 acts as the Nucleophile; for glutamine hydrolysis in catalysis. L-glutamine is bound by residues 380-383 (LGMQ), Glu-403, and Arg-460. Active-site residues include His-503 and Glu-505.

It belongs to the CTP synthase family. In terms of assembly, homotetramer.

It carries out the reaction UTP + L-glutamine + ATP + H2O = CTP + L-glutamate + ADP + phosphate + 2 H(+). It catalyses the reaction L-glutamine + H2O = L-glutamate + NH4(+). The catalysed reaction is UTP + NH4(+) + ATP = CTP + ADP + phosphate + 2 H(+). The protein operates within pyrimidine metabolism; CTP biosynthesis via de novo pathway; CTP from UDP: step 2/2. Its activity is regulated as follows. Allosterically activated by GTP, when glutamine is the substrate; GTP has no effect on the reaction when ammonia is the substrate. The allosteric effector GTP functions by stabilizing the protein conformation that binds the tetrahedral intermediate(s) formed during glutamine hydrolysis. Inhibited by the product CTP, via allosteric rather than competitive inhibition. Its function is as follows. Catalyzes the ATP-dependent amination of UTP to CTP with either L-glutamine or ammonia as the source of nitrogen. Regulates intracellular CTP levels through interactions with the four ribonucleotide triphosphates. The protein is CTP synthase of Methanosarcina barkeri (strain Fusaro / DSM 804).